The sequence spans 563 residues: CDKN2A-interacting protein (563 aa).

N-acetylalanine is present on Ala2. Residues 19–126 form the XRN2-binding (XTBD) domain; it reads VETLRCEGET…KVKKRGISSS (108 aa). 2 disordered regions span residues 122-289 and 304-351; these read GISS…LLGS and SSSE…PSLL. Phosphoserine is present on Ser124. Positions 147–160 are enriched in basic and acidic residues; the sequence is VERDHGKKSAKTDR. Low complexity-rich tracts occupy residues 168 to 216 and 234 to 248; these read SSPS…SSQV and SASF…SMNS. A Glycyl lysine isopeptide (Lys-Gly) (interchain with G-Cter in SUMO1) cross-link involves residue Lys177. Residue Ser234 is modified to Phosphoserine. The segment covering 249–262 has biased composition (polar residues); sequence HMTQSTDNRQQSGS. Over residues 270–280 the composition is skewed to low complexity; it reads GSSGSASQSSS. Thr340 bears the Phosphothreonine mark. Ser371 is subject to Phosphoserine. The region spanning 445 to 520 is the DRBM domain; sequence NHGELLNAAI…SREALKLFLK (76 aa).

Belongs to the CARF family. Interacts with CDKN2A/p14ARF, p53/TP53 and MDM2. Interacts with CHEK2 and MAPK3. Interacts with XRN2. In terms of processing, may be ubiquitinated.

It is found in the nucleus. The protein resides in the nucleoplasm. Regulates DNA damage response and cell proliferation in a dose-dependent manner through a number of signaling pathways involved in cell proliferation, apoptosis and senescence. This Mus musculus (Mouse) protein is CDKN2A-interacting protein (Cdkn2aip).